The primary structure comprises 1802 residues: MAAAPTQIEAELYYLIARFLQSGPCNKSAQVLVQELEEHQLIPRRLDWEGKEHRRSFEDLVAANAHIPPDYLLKICERIGPLLDKEIPQSVPGVQTLLGVGRQSLLRDAKDCKSTLWNGSAFAALHRGRPPELPVNYVKPPNVVNITSARQLTGCSRFGHIFPSSAYQHIKMHKRILGHLSSVYCVAFDRSGRRIFTGSDDCLVKIWATDDGRLLATLRGHSAEISDMAVNYENTLIAAGSCDKVVRVWCLRTCAPVAVLQGHSASITSIQFCPSTKGTNRYLTSTGADGTICFWQWHVKTMKFRDRPVKFTERSRPGVQISCSSFSSGGMFITTGSTDHVIRIYYLGSEVPEKIAELESHTDKVVAVQFCNNGDSLRFVSGSRDGTARIWQYQQQEWKSIVLDMATKMTGNNLPSGEDKITKLKVTMVAWDRYDTTVITAVNNFLLKVWNSITGQLLHTLSGHDDEVFVLEAHPFDQRIILSAGHDGNIFIWDLDRGTKIRNYFNMIEGQGHGAVFDCKFSPDGNHFACTDSHGHLLLFGFGCSKYYEKIPDQMFFHTDYRPLIRDANNYVLDEQTQQAPHLMPPPFLVDVDGNPHPTKFQRLVPGRENCKDEQLIPQLGYVANGDGEVVEQVIGQQTNDQDESILDGIIRELQREQDLRLINEGDVPHLPVNRAYSVNGALRSPNMDISSSPNIRLRRHSSQIEGVRQMHNNAPRSQMATERDLMAWSRRVVVNELNNGVSRVQEECRTAKGDIEISLYTVEKKKKPSYTTQRNDYEPSCGRSLRRTQRKRQHTYQTRSNIEHNSQASCQNSGVQEDSDSSSEEDETVGTSDASVEDPVVEWQSESSSSDSSSEYSDWTADAGINLQPPKRQTRQTTRKICSSSDEENLKSLEERQKKPKQTRKKKGGLVSIAGEPNEEWFAPQWILDTIPRRSPFVPQMGDELIYFRQGHEAYVRAVRKSKIYSVNLQKQPWNKMDLREQEFVKIVGIKYEVGPPTLCCLKLAFLDPISGKMTGESFSIKYHDMPDVIDFLVLHQFYNEAKERNWQIGDRFRSIIDDAWWFGTVESQQPFQPEYPDSSFQCYSVHWDNNEREKMSPWDMEPIPEGTAFPDEVGAGVPVSQEELTALLYKPQEGEWGAHSRDEECERVIQGINHLLSLDFASPFAVPVDLSAYPLYCTVVAYPTDLNTIRRRLENRFYRRISALMWEVRYIEHNARTFNEPDSPIVKAAKIVTDVLLRFIGDQSCTDILDTYNKIKAEERNSTDAEEDTEIVDLDSDGPGTSSGRKVKCRGRRQSLKCNPDAWKKQCKELLSLIYEREDSEPFRQPADLLSYPGHQEQEGESSESVVPERQQDSSLSEDYQDVIDTPVDFSTVKETLEAGNYGSPLEFYKDVRQIFNNSKAYTSNKKSRIYSMMLRLSALFESHIKNIISEYKSAIQSQKRRRPRYRKRLRSSSSSLSSSGAPSPKGKQKQMKLQPKNDQNTSVSHARTSSPFSSPVSDAAEGLSLYLLDDEPDGPFSSSSFGGYSRSGNSHDPGKAKSFRNRVLPVKQDHSLDGPLTNGDGREPRTGIKRKLLSASEEDENMGGEDKEKKETKEKSHLSTSESGELGSSLSSESTCGSDSDSESTSRTDQDYVDGDHDYSKFIQTRPKRKLRKQHGNGKRNWKTRGTGGRGRWGRWGRWSRGGRGRGGRGRGSRGRGGGGTRGRGRGRGGRGASRGATRAKRARIADDEFDTMFSGRFSRLPRIKTRNQGRRTVLYNDDSDNDNFVSTEDPLNLGTSRSGRVRKMTEKARVSHLMGWNY.

WD repeat units lie at residues Ile170–Thr209, Arg213–Leu251, Ala255–Trp297, Arg307–Leu347, Glu353–Tyr393, Ser400–Ser452, Gln456–Leu495, and Arg502–Phe542. A phosphoserine mark is found at Ser693 and Ser703. The segment at Lys768–Gly910 is disordered. Residues Ser785–His795 show a composition bias toward basic residues. The span at Thr796–Gln817 shows a compositional bias: polar residues. Acidic residues predominate over residues Glu818–Thr829. A compositionally biased stretch (low complexity) spans Ser846–Asp859. Phosphoserine is present on residues Ser885 and Ser886. Residues Glu889 to Gln898 show a composition bias toward basic and acidic residues. Over residues Lys899 to Gly909 the composition is skewed to basic residues. The region spanning Trp1138–Gln1245 is the Bromo 1 domain. Disordered regions lie at residues Arg1262 to Arg1292, Arg1326 to Asp1361, Ile1438 to Ser1500, and Ser1520 to Arg1725. Acidic residues predominate over residues Asp1266–Ser1278. One can recognise a Bromo 2 domain in the interval Cys1300–Ile1430. Residues Gln1441–Arg1453 are compositionally biased toward basic residues. A compositionally biased stretch (low complexity) spans Ser1454 to Lys1468. The span at Lys1479–Val1499 shows a compositional bias: polar residues. Residues Ser1520–Ser1533 are compositionally biased toward low complexity. 2 positions are modified to phosphoserine: Ser1577 and Ser1579. Basic and acidic residues predominate over residues Gly1587–His1600. Residues Leu1601–Glu1626 are compositionally biased toward low complexity. Residues Ser1627–Ser1643 show a composition bias toward basic and acidic residues. Basic residues-rich tracts occupy residues Arg1649–Lys1666 and Arg1684–Arg1697. Residue Ser1763 is modified to Phosphoserine.

Found in most adult tissues. Down-regulated in a majority of the B-CLL cases examined.

Functionally, plays a role in the regulation of cell morphology and cytoskeletal organization. Required in the control of cell shape. This Homo sapiens (Human) protein is Bromodomain and WD repeat-containing protein 3 (BRWD3).